A 100-amino-acid chain; its full sequence is Putative ESAT-6-like protein Y (100 aa).

It belongs to the WXG100 family.

This Mycobacterium leprae (strain TN) protein is Putative ESAT-6-like protein Y.